Reading from the N-terminus, the 91-residue chain is Small ribosomal subunit protein bS18 (91 aa).

The protein belongs to the bacterial ribosomal protein bS18 family. As to quaternary structure, part of the 30S ribosomal subunit. Forms a tight heterodimer with protein bS6.

Its function is as follows. Binds as a heterodimer with protein bS6 to the central domain of the 16S rRNA, where it helps stabilize the platform of the 30S subunit. The polypeptide is Small ribosomal subunit protein bS18 (Burkholderia lata (strain ATCC 17760 / DSM 23089 / LMG 22485 / NCIMB 9086 / R18194 / 383)).